The primary structure comprises 447 residues: Phosphoglucosamine mutase (447 aa).

S100 (phosphoserine intermediate) is an active-site residue. Positions 100, 240, 242, and 244 each coordinate Mg(2+). S100 carries the phosphoserine modification.

Belongs to the phosphohexose mutase family. Mg(2+) is required as a cofactor. Activated by phosphorylation.

The enzyme catalyses alpha-D-glucosamine 1-phosphate = D-glucosamine 6-phosphate. Its function is as follows. Catalyzes the conversion of glucosamine-6-phosphate to glucosamine-1-phosphate. The chain is Phosphoglucosamine mutase from Clostridium botulinum (strain Eklund 17B / Type B).